The following is a 313-amino-acid chain: Putative adhesin P1-like protein MPN_202 (313 aa).

Low complexity predominate over residues 1 to 16 (MGSQNQGSTTTTSAGN). The tract at residues 1-44 (MGSQNQGSTTTTSAGNPDSLVTDKVDQKGQVQTSGQNLSDTNYT) is disordered. Positions 29–44 (GQVQTSGQNLSDTNYT) are enriched in polar residues.

This sequence belongs to the adhesin P1 family.

The chain is Putative adhesin P1-like protein MPN_202 from Mycoplasma pneumoniae (strain ATCC 29342 / M129 / Subtype 1) (Mycoplasmoides pneumoniae).